Consider the following 208-residue polypeptide: Ubiquitin-conjugating enzyme E2 S (208 aa).

The UBC core domain maps to 14–160; the sequence is QTIRQVMKEL…ARMMTEIHAQ (147 aa). C98 acts as the Glycyl thioester intermediate in catalysis. Residues 161 to 196 form a disordered region; the sequence is PAKCGAGASDAKDDDGPSTKKHAGVDKKLQDKKKEK. The segment covering 170 to 196 has biased composition (basic and acidic residues); that stretch reads DAKDDDGPSTKKHAGVDKKLQDKKKEK.

This sequence belongs to the ubiquitin-conjugating enzyme family.

It carries out the reaction S-ubiquitinyl-[E1 ubiquitin-activating enzyme]-L-cysteine + [E2 ubiquitin-conjugating enzyme]-L-cysteine = [E1 ubiquitin-activating enzyme]-L-cysteine + S-ubiquitinyl-[E2 ubiquitin-conjugating enzyme]-L-cysteine.. It functions in the pathway protein modification; protein ubiquitination. Its function is as follows. Catalyzes the covalent attachment of ubiquitin to other proteins. Acts as an essential factor of the anaphase promoting complex/cyclosome (APC/C), a cell cycle-regulated ubiquitin ligase that controls progression through mitosis. Acts by specifically elongating polyubiquitin chains initiated by the E2 enzyme vih/UbcH10 on APC/C substrates, enhancing the degradation of APC/C substrates by the proteasome and promoting mitotic exit. The polypeptide is Ubiquitin-conjugating enzyme E2 S (Drosophila grimshawi (Hawaiian fruit fly)).